A 331-amino-acid polypeptide reads, in one-letter code: Dof zinc finger protein DOF1.1 (331 aa).

The Dof-type zinc-finger motif lies at L77 to K131. Zn(2+) contacts are provided by C79, C82, C104, and C107. Disordered stretches follow at residues P121 to Q166 and E291 to L331. Over residues N135 to Q160 the composition is skewed to low complexity. Over residues G305–Y316 the composition is skewed to polar residues.

Interacts with OBF4. In terms of tissue distribution, expressed in the vasculature (mainly in the phloem and associated cell files) of cotyledons, leaves, roots, flower stalks and petals. The PEAR proteins (e.g. DOF2.4, DOF5.1, DOF3.2, DOF1.1, DOF5.6 and DOF5.3) form a short-range concentration gradient that peaks at protophloem sieve elements (PSE).

It is found in the nucleus. Functionally, transcription factor that binds specifically to a 5'-AA[AG]G-3' consensus core sequence. Enhances the DNA binding of OBF transcription factors to OCS elements. Involved in the regulation of root development. The PEAR proteins (e.g. DOF2.4, DOF5.1, DOF3.2, DOF1.1, DOF5.6 and DOF5.3) activate gene expression that promotes radial growth of protophloem sieve elements. Element of a regulatory network controlling indole glucosinolates (IGS) biosynthesis, probably by inducing the expression of accurate genes (e.g. CYP83B1). Promotes apical dominance. The sequence is that of Dof zinc finger protein DOF1.1 from Arabidopsis thaliana (Mouse-ear cress).